The primary structure comprises 249 residues: Domoic acid biosynthesis cluster protein B (249 aa).

Functionally, unknown function: part of the gene cluster that mediates the biosynthesis of domoic acid (DA) and derivatives, natural products with neurochemical activity acting as ionotropic glutamate receptor (iGluR) agonists, thus being neurotoxins causing amnesic shellfish poisoning (ASP). This chain is Domoic acid biosynthesis cluster protein B, found in Pseudo-nitzschia multiseries (Marine planktonic diatom).